An 818-amino-acid chain; its full sequence is Glycerol-3-phosphate acyltransferase (818 aa).

The short motif at 305–310 (HRSHMD) is the HXXXXD motif element.

The protein belongs to the GPAT/DAPAT family.

It localises to the cell inner membrane. The catalysed reaction is sn-glycerol 3-phosphate + an acyl-CoA = a 1-acyl-sn-glycero-3-phosphate + CoA. The protein operates within phospholipid metabolism; CDP-diacylglycerol biosynthesis; CDP-diacylglycerol from sn-glycerol 3-phosphate: step 1/3. The chain is Glycerol-3-phosphate acyltransferase from Photorhabdus laumondii subsp. laumondii (strain DSM 15139 / CIP 105565 / TT01) (Photorhabdus luminescens subsp. laumondii).